We begin with the raw amino-acid sequence, 331 residues long: DNA-directed RNA polymerase subunit alpha (331 aa).

The tract at residues 1 to 233 (MVREEIAVST…DLFLPFLHAE (233 aa)) is alpha N-terminal domain (alpha-NTD). Positions 268 to 331 (ALKRVFIDQS…GILQKRFAID (64 aa)) are alpha C-terminal domain (alpha-CTD).

It belongs to the RNA polymerase alpha chain family. In plastids the minimal PEP RNA polymerase catalytic core is composed of four subunits: alpha, beta, beta', and beta''. When a (nuclear-encoded) sigma factor is associated with the core the holoenzyme is formed, which can initiate transcription.

It is found in the plastid. The protein resides in the chloroplast. The catalysed reaction is RNA(n) + a ribonucleoside 5'-triphosphate = RNA(n+1) + diphosphate. Functionally, DNA-dependent RNA polymerase catalyzes the transcription of DNA into RNA using the four ribonucleoside triphosphates as substrates. The sequence is that of DNA-directed RNA polymerase subunit alpha from Illicium oligandrum (Star anise).